We begin with the raw amino-acid sequence, 556 residues long: Arginine--tRNA ligase (556 aa).

The 'HIGH' region motif lies at 132-142 (ANPTGDLHLGH).

Belongs to the class-I aminoacyl-tRNA synthetase family. In terms of assembly, monomer.

It is found in the cytoplasm. The catalysed reaction is tRNA(Arg) + L-arginine + ATP = L-arginyl-tRNA(Arg) + AMP + diphosphate. The polypeptide is Arginine--tRNA ligase (Bacillus cereus (strain ATCC 14579 / DSM 31 / CCUG 7414 / JCM 2152 / NBRC 15305 / NCIMB 9373 / NCTC 2599 / NRRL B-3711)).